The following is an 872-amino-acid chain: Alanine--tRNA ligase (872 aa).

Residues H567, H571, C669, and H673 each coordinate Zn(2+).

The protein belongs to the class-II aminoacyl-tRNA synthetase family. The cofactor is Zn(2+).

It is found in the cytoplasm. It carries out the reaction tRNA(Ala) + L-alanine + ATP = L-alanyl-tRNA(Ala) + AMP + diphosphate. Functionally, catalyzes the attachment of alanine to tRNA(Ala) in a two-step reaction: alanine is first activated by ATP to form Ala-AMP and then transferred to the acceptor end of tRNA(Ala). Also edits incorrectly charged Ser-tRNA(Ala) and Gly-tRNA(Ala) via its editing domain. The polypeptide is Alanine--tRNA ligase (Streptococcus mutans serotype c (strain ATCC 700610 / UA159)).